The primary structure comprises 133 residues: Small ribosomal subunit protein uS8 (133 aa).

The protein belongs to the universal ribosomal protein uS8 family. As to quaternary structure, part of the 30S ribosomal subunit. Contacts proteins S5 and S12.

One of the primary rRNA binding proteins, it binds directly to 16S rRNA central domain where it helps coordinate assembly of the platform of the 30S subunit. The sequence is that of Small ribosomal subunit protein uS8 from Synechocystis sp. (strain ATCC 27184 / PCC 6803 / Kazusa).